Consider the following 344-residue polypeptide: Protein L-Myc-1-B (344 aa).

Polar residues-rich tracts occupy residues 104–113 and 213–223; these read GSPRVTNTQK and NTMSPQHNFHS. 2 disordered regions span residues 104 to 162 and 208 to 271; these read GSPR…EDEI and LPPE…YLER. Over residues 259 to 270 the composition is skewed to basic and acidic residues; that stretch reads DLAKRKNHNYLE. One can recognise a bHLH domain in the interval 261–313; sequence AKRKNHNYLERKRRNDLRSRFLALREEVPSLSRSTKTPKVVVLSKATEFLKGL. Residues 313–341 form a leucine-zipper region; that stretch reads LVIQEQQLTAEKLKLWSRHQQLLRRISQL.

In terms of assembly, efficient DNA binding requires dimerization with another bHLH protein. Binds DNA as a heterodimer with MAX. As to expression, high levels in oocytes, modest levels in kidney and low levels in spleen.

It is found in the nucleus. This chain is Protein L-Myc-1-B (mycl1-b), found in Xenopus laevis (African clawed frog).